The chain runs to 622 residues: DNA mismatch repair protein MutL (622 aa).

The segment at 376–401 is disordered; that stretch reads REVREGSSTGRAGNYQPPEPPSREAM.

This sequence belongs to the DNA mismatch repair MutL/HexB family.

This protein is involved in the repair of mismatches in DNA. It is required for dam-dependent methyl-directed DNA mismatch repair. May act as a 'molecular matchmaker', a protein that promotes the formation of a stable complex between two or more DNA-binding proteins in an ATP-dependent manner without itself being part of a final effector complex. This is DNA mismatch repair protein MutL from Aeromonas hydrophila subsp. hydrophila (strain ATCC 7966 / DSM 30187 / BCRC 13018 / CCUG 14551 / JCM 1027 / KCTC 2358 / NCIMB 9240 / NCTC 8049).